The following is a 275-amino-acid chain: Phosphonoacetaldehyde hydrolase (275 aa).

D15 (nucleophile) is an active-site residue. Residues D15 and A17 each contribute to the Mg(2+) site. Residue K56 is the Schiff-base intermediate with substrate of the active site. D189 lines the Mg(2+) pocket.

This sequence belongs to the HAD-like hydrolase superfamily. PhnX family. As to quaternary structure, homodimer. The cofactor is Mg(2+).

It carries out the reaction phosphonoacetaldehyde + H2O = acetaldehyde + phosphate + H(+). Involved in phosphonate degradation. The sequence is that of Phosphonoacetaldehyde hydrolase from Pseudomonas fluorescens (strain SBW25).